The chain runs to 508 residues: MDVLVGCSTGINKIYNIHKKTPTGLYGALNTTSELNVMTFGWNSVENNEDYVFYGYSNGILKYWNQKEKQLIGEIDYGQSIKAIHPLNNDKLLVALENGLVDVKTLTAPITTQLAPMNLPTLNKKKSPAAAAAASTVGKNNKSKQVIVEPVNTQSFSLNVATNLSGFAMNPSNDKFAFGGKDVNLTIWDLEKQVKTYSAKFKHDFLNLQEPVSINVVKYMNDDKILIGSDFRIKAYDLRSKTNRSSFLDVSFSKHPIQSIQYTNQKEHYFYASDSIGKVFCYDVRTSRQVGSFKDSAGSVKDIAIHPTLPLLATVGLDRHLRVYNLDNRKMLHKIFLKQRLSCVLFSKEEPTNEIAQEEEEIWKNLEENKNRINNDDNDDNNEGNDKKKSISIKVTDNMDSDDDIEDGDDNDVEFPMEADSDDSDFDLGNSDDDNISVKKENKGDSDDSDDDSDEDEKPKRKTPAKSNLRNNNNNNNKGKNNKGKNNSSTKKTSQVLKKKFAGLKKRK.

4 WD repeats span residues 32–74 (TSEL…LIGE), 159–198 (NVATNLSGFAMNPSNDKFAFGGKDVNLTIWDLEKQVKTYS), 252–292 (FSKH…QVGS), and 295–334 (DSAGSVKDIAIHPTLPLLATVGLDRHLRVYNLDNRKMLHK). A disordered region spans residues 368-508 (ENKNRINNDD…KKFAGLKKRK (141 aa)). The segment covering 399 to 435 (MDSDDDIEDGDDNDVEFPMEADSDDSDFDLGNSDDDN) has biased composition (acidic residues). The segment covering 436-446 (ISVKKENKGDS) has biased composition (basic and acidic residues). Positions 447–456 (DDSDDDSDED) are enriched in acidic residues. The segment covering 471-493 (NNNNNNNKGKNNKGKNNSSTKKT) has biased composition (low complexity). Residues 497 to 508 (LKKKFAGLKKRK) show a composition bias toward basic residues.

This chain is WD repeat-containing protein DDB_G0290555, found in Dictyostelium discoideum (Social amoeba).